The following is a 308-amino-acid chain: ATP synthase gamma chain (308 aa).

Belongs to the ATPase gamma chain family. F-type ATPases have 2 components, CF(1) - the catalytic core - and CF(0) - the membrane proton channel. CF(1) has five subunits: alpha(3), beta(3), gamma(1), delta(1), epsilon(1). CF(0) has three main subunits: a, b and c.

It is found in the cell inner membrane. Functionally, produces ATP from ADP in the presence of a proton gradient across the membrane. The gamma chain is believed to be important in regulating ATPase activity and the flow of protons through the CF(0) complex. This chain is ATP synthase gamma chain, found in Bartonella tribocorum (strain CIP 105476 / IBS 506).